The sequence spans 359 residues: Alanine racemase (359 aa).

Lys34 (proton acceptor; specific for D-alanine) is an active-site residue. Lys34 bears the N6-(pyridoxal phosphate)lysine mark. Residue Arg129 participates in substrate binding. Catalysis depends on Tyr256, which acts as the Proton acceptor; specific for L-alanine. Met304 provides a ligand contact to substrate.

This sequence belongs to the alanine racemase family. It depends on pyridoxal 5'-phosphate as a cofactor.

It carries out the reaction L-alanine = D-alanine. It functions in the pathway amino-acid biosynthesis; D-alanine biosynthesis; D-alanine from L-alanine: step 1/1. Functionally, catalyzes the interconversion of L-alanine and D-alanine. May also act on other amino acids. In Photobacterium profundum (strain SS9), this protein is Alanine racemase (alr).